The following is a 78-amino-acid chain: U-scoloptoxin(04)-Er1e (78 aa).

An N-terminal signal peptide occupies residues 1 to 24 (MTRHLIFAAMLLVCLFVCWNAVGA). The propeptide occupies 25 to 28 (RDAR).

Belongs to the scoloptoxin-04 family. In terms of processing, contains 2 disulfide bonds. In terms of tissue distribution, expressed by the venom gland.

The protein resides in the secreted. The polypeptide is U-scoloptoxin(04)-Er1e (Ethmostigmus rubripes (Giant centipede)).